A 99-amino-acid chain; its full sequence is Malonate decarboxylase acyl carrier protein (99 aa).

Residue Ser25 is modified to O-(phosphoribosyl dephospho-coenzyme A)serine.

The protein belongs to the MdcC family. Covalently binds the prosthetic group of malonate decarboxylase.

The protein resides in the cytoplasm. Functionally, subunit of malonate decarboxylase, it is an acyl carrier protein to which acetyl and malonyl thioester residues are bound via a 2'-(5''-phosphoribosyl)-3'-dephospho-CoA prosthetic group and turn over during the catalytic mechanism. This chain is Malonate decarboxylase acyl carrier protein, found in Pseudomonas fluorescens (strain Pf0-1).